Here is a 66-residue protein sequence, read N- to C-terminus: MAKGKDARIPVLLECTACVRNGVNKESTGISRYITQKNRHNTPNRLELLKFCPYCYKHTIHGEIKK.

The protein belongs to the bacterial ribosomal protein bL33 family.

It is found in the plastid. The protein localises to the chloroplast. This chain is Large ribosomal subunit protein bL33c, found in Helianthus annuus (Common sunflower).